The sequence spans 291 residues: 3-hydroxy-5-phosphonooxypentane-2,4-dione thiolase (291 aa).

The Schiff-base intermediate with substrate role is filled by K203.

This sequence belongs to the DeoC/FbaB aldolase family. As to quaternary structure, homodecamer.

The protein resides in the cytoplasm. It catalyses the reaction dihydroxyacetone phosphate + acetyl-CoA = 3-hydroxy-2,4-dioxopentyl phosphate + CoA. In terms of biological role, involved in the degradation of phospho-AI-2, thereby terminating induction of the lsr operon and closing the AI-2 signaling cycle. Catalyzes the transfer of an acetyl moiety from 3-hydroxy-5-phosphonooxypentane-2,4-dione to CoA to form glycerone phosphate and acetyl-CoA. This chain is 3-hydroxy-5-phosphonooxypentane-2,4-dione thiolase, found in Yersinia pseudotuberculosis serotype O:1b (strain IP 31758).